A 154-amino-acid polypeptide reads, in one-letter code: Transcriptional repressor NrdR (154 aa).

A zinc finger spans residues 3–34 (CPFCGANDTKVIDSRLVAEGEQVRRRRECLAC). Residues 49-139 (PRLIKQDGSR…VYRRFQDLNE (91 aa)) enclose the ATP-cone domain.

This sequence belongs to the NrdR family. It depends on Zn(2+) as a cofactor.

In terms of biological role, negatively regulates transcription of bacterial ribonucleotide reductase nrd genes and operons by binding to NrdR-boxes. This Pseudomonas savastanoi pv. phaseolicola (strain 1448A / Race 6) (Pseudomonas syringae pv. phaseolicola (strain 1448A / Race 6)) protein is Transcriptional repressor NrdR.